A 540-amino-acid chain; its full sequence is Chaperonin GroEL 3 (540 aa).

Residues 30 to 33, Lys-51, 87 to 91, Gly-415, 479 to 481, and Asp-495 each bind ATP; these read TLGP, DGTTT, and NAA.

The protein belongs to the chaperonin (HSP60) family. As to quaternary structure, forms a cylinder of 14 subunits composed of two heptameric rings stacked back-to-back. Interacts with the co-chaperonin GroES.

The protein resides in the cytoplasm. The catalysed reaction is ATP + H2O + a folded polypeptide = ADP + phosphate + an unfolded polypeptide.. Together with its co-chaperonin GroES, plays an essential role in assisting protein folding. The GroEL-GroES system forms a nano-cage that allows encapsulation of the non-native substrate proteins and provides a physical environment optimized to promote and accelerate protein folding. This chain is Chaperonin GroEL 3, found in Burkholderia ambifaria (strain ATCC BAA-244 / DSM 16087 / CCUG 44356 / LMG 19182 / AMMD) (Burkholderia cepacia (strain AMMD)).